Consider the following 338-residue polypeptide: Toxin coregulated pilus biosynthesis protein F (338 aa).

The signal sequence occupies residues 1-20; sequence MRYKKTLMLSIMITSFNSFA.

Its subcellular location is the cell outer membrane. Functionally, involved in TCP pilus biogenesis. May be a channel protein. This chain is Toxin coregulated pilus biosynthesis protein F (tcpF), found in Vibrio cholerae serotype O1 (strain ATCC 39541 / Classical Ogawa 395 / O395).